We begin with the raw amino-acid sequence, 336 residues long: Dihydroorotate dehydrogenase (quinone) (336 aa).

FMN contacts are provided by residues Ala-62–Lys-66 and Thr-86. Lys-66 is a binding site for substrate. Asn-111–Phe-115 is a substrate binding site. FMN contacts are provided by Asn-139 and Asn-172. Residue Asn-172 coordinates substrate. Ser-175 (nucleophile) is an active-site residue. Asn-177 is a binding site for substrate. FMN is bound by residues Lys-217 and Thr-245. Asn-246 to Thr-247 provides a ligand contact to substrate. FMN is bound by residues Gly-268, Gly-297, and Tyr-318 to Ser-319.

Belongs to the dihydroorotate dehydrogenase family. Type 2 subfamily. In terms of assembly, monomer. FMN is required as a cofactor.

It localises to the cell membrane. It carries out the reaction (S)-dihydroorotate + a quinone = orotate + a quinol. It functions in the pathway pyrimidine metabolism; UMP biosynthesis via de novo pathway; orotate from (S)-dihydroorotate (quinone route): step 1/1. Functionally, catalyzes the conversion of dihydroorotate to orotate with quinone as electron acceptor. The sequence is that of Dihydroorotate dehydrogenase (quinone) from Salmonella gallinarum (strain 287/91 / NCTC 13346).